The primary structure comprises 610 residues: Elongation factor 4 (610 aa).

Residues 11-193 (EKIRNFSIIA…QIVEKVPAPT (183 aa)) form the tr-type G domain. Residues 23–28 (DHGKST) and 140–143 (NKID) contribute to the GTP site.

It belongs to the TRAFAC class translation factor GTPase superfamily. Classic translation factor GTPase family. LepA subfamily.

The protein resides in the cell membrane. It carries out the reaction GTP + H2O = GDP + phosphate + H(+). Functionally, required for accurate and efficient protein synthesis under certain stress conditions. May act as a fidelity factor of the translation reaction, by catalyzing a one-codon backward translocation of tRNAs on improperly translocated ribosomes. Back-translocation proceeds from a post-translocation (POST) complex to a pre-translocation (PRE) complex, thus giving elongation factor G a second chance to translocate the tRNAs correctly. Binds to ribosomes in a GTP-dependent manner. The sequence is that of Elongation factor 4 from Streptococcus pyogenes serotype M3 (strain ATCC BAA-595 / MGAS315).